We begin with the raw amino-acid sequence, 470 residues long: Putative multidrug resistance protein MdtD (470 aa).

The Periplasmic segment spans residues 1–11; sequence MTELPDNTRWQ. A helical membrane pass occupies residues 12-32; that stretch reads LWIVALGFFMQSLDTTIVNTA. The Cytoplasmic portion of the chain corresponds to 33-48; that stretch reads LPSMAKSLGESPLHMH. Residues 49–69 traverse the membrane as a helical segment; sequence MVVVSYVLTVAVMLPASGWLA. At 70 to 76 the chain is on the periplasmic side; the sequence is DKIGVRN. The chain crosses the membrane as a helical span at residues 77–97; the sequence is IFFAAIVLFTLGSLFCALSGT. Over 98 to 101 the chain is Cytoplasmic; that stretch reads LNQL. Residues 102–124 form a helical membrane-spanning segment; that stretch reads VLARVLQGVGGAMMVPVGRLTVM. The Periplasmic portion of the chain corresponds to 125-137; that stretch reads KIVPRAQYMAAMT. Residues 138–158 form a helical membrane-spanning segment; it reads FVTLPGQIGPLLGPALGGVLV. Residues 159–164 are Cytoplasmic-facing; the sequence is EYASWH. The chain crosses the membrane as a helical span at residues 165–185; it reads WIFLINIPVGIVGAMATFMLM. Residues 186-196 are Periplasmic-facing; sequence PNYTIETRRFD. A helical membrane pass occupies residues 197–217; it reads LPGFLLLAIGMAVLTLALDGS. Residues 218–221 lie on the Cytoplasmic side of the membrane; that stretch reads KSMG. A helical membrane pass occupies residues 222-242; sequence ISPWTLAGLAAGGAAAILLYL. Residues 243 to 262 are Periplasmic-facing; the sequence is LHAKKNSGALFSLRLFCTPT. Residues 263–283 form a helical membrane-spanning segment; that stretch reads FSLGLLGSFAGRIGSGMLPFM. The Cytoplasmic portion of the chain corresponds to 284–285; sequence TP. Residues 286-306 form a helical membrane-spanning segment; it reads VFLQIGLGFSPFHAGLMMIPM. At 307–341 the chain is on the periplasmic side; the sequence is VLGSMGMKRIVVQIVNRFGYRRVLVATTLGLALVS. The helical transmembrane segment at 342–362 threads the bilayer; it reads LLFMSVALLGWYYLLPLVLLL. Over 363-395 the chain is Cytoplasmic; sequence QGMVNSARFSSMNTLTLKDLPDTLASSGNSLLS. The chain crosses the membrane as a helical span at residues 396-416; the sequence is MIMQLSMSIGVTIAGMLLGMF. Residues 417–430 are Periplasmic-facing; that stretch reads GQQHIGIDSSATHH. A helical transmembrane segment spans residues 431–451; it reads VFMYTWLCMAVIIALPAIIFA. Topologically, residues 452–470 are cytoplasmic; that stretch reads RVPNDTQQNMVISRRKRSL.

This sequence belongs to the major facilitator superfamily. TCR/Tet family.

It localises to the cell inner membrane. The sequence is that of Putative multidrug resistance protein MdtD from Salmonella paratyphi B (strain ATCC BAA-1250 / SPB7).